A 249-amino-acid chain; its full sequence is Granaticin polyketide synthase putative ketoacyl reductase 2 (249 aa).

12-36 provides a ligand contact to NAD(+); sequence LVTGSSSGIGQTVAQRLAAEGYRVV. Residue serine 144 participates in substrate binding. Tyrosine 157 functions as the Proton acceptor in the catalytic mechanism.

Belongs to the short-chain dehydrogenases/reductases (SDR) family.

Its pathway is antibiotic biosynthesis; granaticin biosynthesis. The chain is Granaticin polyketide synthase putative ketoacyl reductase 2 (gra-orf6) from Streptomyces violaceoruber.